We begin with the raw amino-acid sequence, 25 residues long: GLFSVLGSVAKHLLPHVAPIIAEKL.

Leu-25 bears the Leucine amide mark.

This sequence belongs to the frog skin active peptide (FSAP) family. Caerin subfamily. Expressed by the skin dorsal glands.

It is found in the secreted. In terms of biological role, caerin-1.17 shows significant activity against Gram-positive organisms, but is less effective against Gram-negative organisms. The protein is Caerin-1.17 of Ranoidea gracilenta (Dainty green tree frog).